The following is a 289-amino-acid chain: MTLTLNHCPAPAKLNLFLHVTGRRADGYHLLQSVFQLIDRGDVLHFATRDDNLIQRTTDLPGVPAESDLVVRAAKLLQTVATEKNPAKNFGADIAVEKKLPMGGGLGGGSSDAATTLLALNHLWQTGLSRAELMALGLQLGADVPFFIFGQNAFAEGIGEALVEVETPDRWFVVIEPGVSVPTPQIFSSTELTRDTKPVKISDFSGAQESFGKNDLQVVAEKLFPPIAEAIQWLGQYGDARMTGSGACVFCPFEQEQQADAVLTTVPPHWKAWKAKAIKHHPLAYLQQS.

Residue lysine 13 is part of the active site. 101 to 111 (PMGGGLGGGSS) is an ATP binding site. Aspartate 143 is an active-site residue.

The protein belongs to the GHMP kinase family. IspE subfamily.

It catalyses the reaction 4-CDP-2-C-methyl-D-erythritol + ATP = 4-CDP-2-C-methyl-D-erythritol 2-phosphate + ADP + H(+). Its pathway is isoprenoid biosynthesis; isopentenyl diphosphate biosynthesis via DXP pathway; isopentenyl diphosphate from 1-deoxy-D-xylulose 5-phosphate: step 3/6. Its function is as follows. Catalyzes the phosphorylation of the position 2 hydroxy group of 4-diphosphocytidyl-2C-methyl-D-erythritol. The polypeptide is 4-diphosphocytidyl-2-C-methyl-D-erythritol kinase (Janthinobacterium sp. (strain Marseille) (Minibacterium massiliensis)).